We begin with the raw amino-acid sequence, 401 residues long: Tetracycline resistance protein, class B (401 aa).

Residues 1 to 6 (MNSSTK) lie on the Cytoplasmic side of the membrane. A helical membrane pass occupies residues 7–30 (IALVITLLDAMGIGLIMPVLPTLL). The Periplasmic segment spans residues 31 to 42 (REFIASEDIANH). Residues 43 to 61 (FGVLLALYALMQVIFAPWL) traverse the membrane as a helical segment. Residues 62–71 (GKMSDRFGRR) lie on the Cytoplasmic side of the membrane. A helical membrane pass occupies residues 72-91 (PVLLLSLIGASLDYLLLAFS). The Periplasmic portion of the chain corresponds to 92–98 (SALWMLY). A helical transmembrane segment spans residues 99 to 119 (LGRLLSGITGATGAVAASVIA). Residues 120-129 (DTTSASQRVK) are Cytoplasmic-facing. The chain crosses the membrane as a helical span at residues 130–152 (WFGWLGASFGLGLIAGPIIGGFA). Over 153-158 (GEISPH) the chain is Periplasmic. The helical transmembrane segment at 159–178 (SPFFIAALLNIVTFLVVMFW) threads the bilayer. Topologically, residues 179 to 211 (FRETKNTRDNTDTEVGVETQSNSVYITLFKTMP) are cytoplasmic. The helical transmembrane segment at 212–232 (ILLIIYFSAQLIGQIPATVWV) threads the bilayer. Residues 233–243 (LFTENRFGWNS) lie on the Periplasmic side of the membrane. Residues 244 to 265 (MMVGFSLAGLGLLHSVFQAFVA) traverse the membrane as a helical segment. Topologically, residues 266–275 (GRIATKWGEK) are cytoplasmic. Residues 276 to 295 (TAVLLGFIADSSAFAFLAFI) traverse the membrane as a helical segment. Residues 296 to 298 (SEG) are Periplasmic-facing. The helical transmembrane segment at 299–322 (WLVFPVLILLAGGGIALPALQGVM) threads the bilayer. The Cytoplasmic segment spans residues 323 to 332 (SIQTKSHQQG). Residues 333–356 (ALQGLLVSLTNATGVIGPLLFAVI) form a helical membrane-spanning segment. Residues 357 to 365 (YNHSLPIWD) lie on the Periplasmic side of the membrane. Residues 366-387 (GWIWIIGLAFYCIIILLSMTFM) form a helical membrane-spanning segment. Residues 388-401 (LTPQAQGSKQETSA) lie on the Cytoplasmic side of the membrane.

Belongs to the major facilitator superfamily. TCR/Tet family.

It localises to the cell inner membrane. Its function is as follows. Resistance to tetracycline by an active tetracycline efflux. This is an energy-dependent process that decreases the accumulation of the antibiotic in whole cells. This protein functions as a metal-tetracycline/H(+) antiporter. This chain is Tetracycline resistance protein, class B (tetA), found in Escherichia coli.